The chain runs to 474 residues: Nuclear hormone receptor family member nhr-91 (474 aa).

Residues 50–69 (SMTPSFSQTESPNSETDDST) are disordered. The segment covering 51–69 (MTPSFSQTESPNSETDDST) has biased composition (polar residues). A DNA-binding region (nuclear receptor) is located at residues 97–172 (SKLCSVCGDK…KGMLTEAVRE (76 aa)). 2 NR C4-type zinc fingers span residues 100-120 (CSVC…CEGC) and 136-155 (CSQD…CQSC). In terms of domain architecture, NR LBD spans 215–474 (SGKKLIKELV…KNPRRLVFDE (260 aa)).

It belongs to the nuclear hormone receptor family.

The protein resides in the nucleus. Functionally, orphan nuclear receptor. The polypeptide is Nuclear hormone receptor family member nhr-91 (nhr-91) (Caenorhabditis elegans).